A 95-amino-acid polypeptide reads, in one-letter code: Co-chaperonin GroES (95 aa).

Belongs to the GroES chaperonin family. In terms of assembly, heptamer of 7 subunits arranged in a ring. Interacts with the chaperonin GroEL.

It is found in the cytoplasm. Its function is as follows. Together with the chaperonin GroEL, plays an essential role in assisting protein folding. The GroEL-GroES system forms a nano-cage that allows encapsulation of the non-native substrate proteins and provides a physical environment optimized to promote and accelerate protein folding. GroES binds to the apical surface of the GroEL ring, thereby capping the opening of the GroEL channel. This chain is Co-chaperonin GroES, found in Pelobacter propionicus (strain DSM 2379 / NBRC 103807 / OttBd1).